Consider the following 176-residue polypeptide: Translation initiation factor IF-3 (176 aa).

The protein belongs to the IF-3 family. In terms of assembly, monomer.

The protein resides in the cytoplasm. Functionally, IF-3 binds to the 30S ribosomal subunit and shifts the equilibrium between 70S ribosomes and their 50S and 30S subunits in favor of the free subunits, thus enhancing the availability of 30S subunits on which protein synthesis initiation begins. This is Translation initiation factor IF-3 from Streptococcus equi subsp. zooepidemicus (strain H70).